The primary structure comprises 482 residues: MFS-type transporter traF (482 aa).

Residues 1–14 (MTSGTEQATLNTEE) show a composition bias toward polar residues. Residues 1–22 (MTSGTEQATLNTEENGSDSDHL) are disordered. N-linked (GlcNAc...) asparagine glycosylation is found at asparagine 15 and asparagine 45. The next 9 membrane-spanning stretches (helical) occupy residues 52-72 (VFIT…SSVM), 89-109 (LSIL…LLFG), 125-145 (VFLF…ATIF), 149-169 (FLCG…LADL), 176-196 (GIAV…GPLV), 209-229 (WTQW…FVFC), 275-295 (PILA…YLCF), 312-332 (IGSL…VIII), and 354-374 (LVPM…FAWT). Asparagine 376 carries N-linked (GlcNAc...) asparagine glycosylation. 3 consecutive transmembrane segments (helical) span residues 379-399 (LPWA…LLIF), 427-447 (LLGA…GVPW), and 448-468 (AMSL…LFFI).

This sequence belongs to the major facilitator superfamily. CAR1 family.

It localises to the membrane. Its function is as follows. MFS-type transporter; part of the tra gene cluster that produces terrestric acid. The clavatol biosynthesis cluster cla and the terrestric acid cluster tra are both involved in the production of peniphenones and penilactones. The polypeptide is MFS-type transporter traF (Penicillium crustosum (Blue mold fungus)).